The sequence spans 369 residues: Extracellular signal-regulated kinase 2 (369 aa).

In terms of domain architecture, Protein kinase spans 14–304; that stretch reads YEVLQKIGKG…AEEALAHPFV (291 aa). ATP contacts are provided by residues 20-28 and Lys-43; that span reads IGKGAYGIV. Residue Asp-137 is the Proton acceptor of the active site. At Thr-176 the chain carries Phosphothreonine. Positions 176–178 match the TXY motif; sequence TEY. Residue Tyr-178 is modified to Phosphotyrosine. The disordered stretch occupies residues 346 to 369; sequence KKKEERKKQTNPTKPDTTAPTLST. Residues 355 to 369 show a composition bias toward polar residues; sequence TNPTKPDTTAPTLST.

Belongs to the protein kinase superfamily. CMGC Ser/Thr protein kinase family. MAP kinase subfamily. It depends on Mg(2+) as a cofactor. Dually phosphorylated on Thr-176 and Tyr-178, which activates the enzyme.

It catalyses the reaction L-seryl-[protein] + ATP = O-phospho-L-seryl-[protein] + ADP + H(+). It carries out the reaction L-threonyl-[protein] + ATP = O-phospho-L-threonyl-[protein] + ADP + H(+). Activated by tyrosine and threonine phosphorylation. Its function is as follows. Implicated in the relay of the cAMP chemotactic signal and cell differentiation. Important for receptor-mediated activation of adenylyl cyclase. This is Extracellular signal-regulated kinase 2 (erkB) from Dictyostelium discoideum (Social amoeba).